The chain runs to 134 residues: Small ribosomal subunit protein bS16 (134 aa).

Residues 81–134 (LAKRPARSNPKKAEPGKKAQERLAAARQAEEEAKAAAEAAAAAPAEAPAEEAAS) form a disordered region. The span at 91–101 (KKAEPGKKAQE) shows a compositional bias: basic and acidic residues. Positions 116–134 (AAEAAAAAPAEAPAEEAAS) are enriched in low complexity.

It belongs to the bacterial ribosomal protein bS16 family.

The sequence is that of Small ribosomal subunit protein bS16 from Chelativorans sp. (strain BNC1).